Consider the following 339-residue polypeptide: Biotin synthase (339 aa).

Residues 55–282 (NAVQLSTLLS…KAVVRLSAGR (228 aa)) form the Radical SAM core domain. Cys70, Cys74, and Cys77 together coordinate [4Fe-4S] cluster. [2Fe-2S] cluster is bound by residues Cys114, Cys145, Cys205, and Arg277.

Belongs to the radical SAM superfamily. Biotin synthase family. As to quaternary structure, homodimer. It depends on [4Fe-4S] cluster as a cofactor. [2Fe-2S] cluster serves as cofactor.

The enzyme catalyses (4R,5S)-dethiobiotin + (sulfur carrier)-SH + 2 reduced [2Fe-2S]-[ferredoxin] + 2 S-adenosyl-L-methionine = (sulfur carrier)-H + biotin + 2 5'-deoxyadenosine + 2 L-methionine + 2 oxidized [2Fe-2S]-[ferredoxin]. It participates in cofactor biosynthesis; biotin biosynthesis; biotin from 7,8-diaminononanoate: step 2/2. Its function is as follows. Catalyzes the conversion of dethiobiotin (DTB) to biotin by the insertion of a sulfur atom into dethiobiotin via a radical-based mechanism. This Burkholderia ambifaria (strain MC40-6) protein is Biotin synthase.